Reading from the N-terminus, the 893-residue chain is MDKDVQEITDSKQQLTEAAFSNHTPMMQQYLRIKAEHPETLVFYRMGDFYELFFEDAEKAARLLDLTLTQRGASAGTPIKMAGVPHHAVEQYLAKLVKFGESAAICEQIGDPATSKGPVERKVVRVVTPGTLTDAALLSDKSDVFLLALCVGHNKRGVASTIGLAWLNLASGALRLAEIAPDQLGAALERIRPAEILAADGAIEAVPAGTGAITRVPAWHFDIASGTQRLCDQLEVASLDGFGAQALTSANGAAGALLIYAAATQGQQLRHVRSLKVENESEYIGLDPSTRRNLELTETLRGTESPTLYSLLDTCCTAMGSRLLRHWLHHPPRASVAAQARHQAIGALLDAPVHVGLDSLRSALRQIADVERITGRLALLSARPRDLSSLRDTFAALPALRERVAEIAPNAAALGRLEAALEPPPGCLDLLTRAIAPEPAAMVRDGGVIARGYDAELDELRDISENCGQFLIDLETRERARTGIPNLRVEYNKVHGFYIEVTRGQTDKVPDDYRRRQTLKNAERYITPELKTFEDKALSAQERALARERALYDSVLQALLPHIEGCQRVASGLAELDLLAAFAERARTLDWVAPEFIDEIGIEIDQGRHPVVEAQVEQFIANDCALNSDRKLLLITGPNMGGKSTFMRQTALIALMAYVGSYVPAKAARFGPIDRIFTRIGAADDLAGGRSTFMVEMTEAAAILNDATPQSLVLMDEIGRGTSTFDGLALAWAIARHLLSHNRCYTLFATHYFELTQLPAEFPQAANVHLSAVEHGHGIVFLHAVEEGPANQSYGLQVAQLAGVPAPVIRAARKHLAHLEQQSAAQATPQLDLFAAQPIVDEQECNQPPAAAPHPALERLLALDPDDLKPRDALDLLYELRALARSGATDAQR.

Residue 637–644 (GPNMGGKS) coordinates ATP.

Belongs to the DNA mismatch repair MutS family.

In terms of biological role, this protein is involved in the repair of mismatches in DNA. It is possible that it carries out the mismatch recognition step. This protein has a weak ATPase activity. This chain is DNA mismatch repair protein MutS, found in Burkholderia thailandensis (strain ATCC 700388 / DSM 13276 / CCUG 48851 / CIP 106301 / E264).